The sequence spans 62 residues: Phospholipase A2 superbin a (62 aa).

Residues Tyr-28, Gly-30, and Gly-32 each coordinate Ca(2+). A disulfide bridge connects residues Cys-29 and Cys-45. Residue His-48 is part of the active site. Asp-49 is a binding site for Ca(2+).

Ca(2+) is required as a cofactor. As to expression, expressed by the venom gland.

It localises to the secreted. The enzyme catalyses a 1,2-diacyl-sn-glycero-3-phosphocholine + H2O = a 1-acyl-sn-glycero-3-phosphocholine + a fatty acid + H(+). In terms of biological role, snake venom phospholipase A2 (PLA2) that inhibits collagen-induced platelet aggregation. In terms of inhibition of platelet aggregation, superbin a is more potent as superbin b, c, and d. PLA2 catalyzes the calcium-dependent hydrolysis of the 2-acyl groups in 3-sn-phosphoglycerides. This chain is Phospholipase A2 superbin a, found in Austrelaps superbus (Lowland copperhead snake).